Consider the following 560-residue polypeptide: MPKNMAALQQSLYTGPSTPSHTQFSRSTEFPENLNFDVLNDSYETFSSVSLTTAEQDNQIDKILQESAAMNRDVNSELAQFTASEYVTGFRADTMEPEVIVETIGDSMKRKASELDSDSDSGESSKGKKRVIKPKMRQRYKKATIQNKTSLTEECNYNTEICTVAPTDQIAEYFKHDFSVYLEKQKSDCQMSANRFSDYISETGYYVFVVKKSEHKPFEVVFAKFVNNVTNEYTNNYYMVDNRVFVVSLNNVKFMVSYKLVREQGIDIPPHVNLCDDAQAERNPYDCYFEPVKNVFQTTLINHFHLDMYYSQTTFVTLMQSMGESKSGMLLNKLYQMFQDRSLFTLPIMLSRKEPTIENTPLSRNYTSSYVAQIIKYSKNVRFPENNPDNGVISRLEEIVTQKSSLTYKYSSVANLLFSRYGHQRDNNADSLKKVKKEDGNRLLVEQYMSQNENDETSHNFIVLQFGGVNDERLTIAKKGIEFFWIAAEIKDINVDDLVKKYTRNVHHVFRIINVNRRESTTWHNNLLKLLQLLLQNLIRIDDVQQYSNKGDSKFIYKRL.

Residues Asp-106–Lys-133 form a disordered region.

The protein belongs to the nucleopolyhedrovirus IE-1 protein family.

In terms of biological role, regulatory transcriptional protein, which trans-activates gene expression from early baculovirus promoters. Can also trans-activate its own promoter, suggesting that it is autoregulated during normal infection of insect cells. In Choristoneura fumiferana nuclear polyhedrosis virus (CfMNPV), this protein is Trans-activating transcriptional regulatory protein (IE1).